Consider the following 102-residue polypeptide: Small ribosomal subunit protein uS10 (102 aa).

The protein belongs to the universal ribosomal protein uS10 family. Part of the 30S ribosomal subunit.

Functionally, involved in the binding of tRNA to the ribosomes. This chain is Small ribosomal subunit protein uS10, found in Agrobacterium fabrum (strain C58 / ATCC 33970) (Agrobacterium tumefaciens (strain C58)).